Reading from the N-terminus, the 130-residue chain is MAFLPKFDSAGLVTCVTTDAVSGDVLMVAHMNDEALRKTIATGEAWYFSRSRNALWRKGESSGQTQRVVEMRTDCDQDAVWLRVEQRGAACHTGRHSCFYRKVEMAGEGGARLVFVDADRLFDPAAVYRK.

A Mg(2+)-binding site is contributed by Asp74. Cys75 contacts Zn(2+). Asp76 and Asp78 together coordinate Mg(2+). Residues Cys91 and Cys98 each coordinate Zn(2+).

The protein belongs to the PRA-CH family. Homodimer. It depends on Mg(2+) as a cofactor. Requires Zn(2+) as cofactor.

The protein resides in the cytoplasm. The enzyme catalyses 1-(5-phospho-beta-D-ribosyl)-5'-AMP + H2O = 1-(5-phospho-beta-D-ribosyl)-5-[(5-phospho-beta-D-ribosylamino)methylideneamino]imidazole-4-carboxamide. It functions in the pathway amino-acid biosynthesis; L-histidine biosynthesis; L-histidine from 5-phospho-alpha-D-ribose 1-diphosphate: step 3/9. Catalyzes the hydrolysis of the adenine ring of phosphoribosyl-AMP. The chain is Phosphoribosyl-AMP cyclohydrolase from Bradyrhizobium sp. (strain ORS 278).